The primary structure comprises 344 residues: 3,4-dihydroxy-2-butanone 4-phosphate synthase (344 aa).

The segment at 1 to 202 is DHBP synthase; it reads MILKRVTEAL…VSDLISYRLE (202 aa). Residues 27-28, aspartate 32, 139-143, and glutamate 163 contribute to the D-ribulose 5-phosphate site; these read RE and RTGHT. Glutamate 28 contacts Mg(2+). Histidine 142 is a binding site for Mg(2+). Residues 203 to 344 form a GTP cyclohydrolase II-like region; sequence NESLLKMFCQ…GLKLVETISL (142 aa).

It in the N-terminal section; belongs to the DHBP synthase family. The protein in the C-terminal section; belongs to the GTP cyclohydrolase II family. Mg(2+) is required as a cofactor. The cofactor is Mn(2+).

It carries out the reaction D-ribulose 5-phosphate = (2S)-2-hydroxy-3-oxobutyl phosphate + formate + H(+). Its pathway is cofactor biosynthesis; riboflavin biosynthesis; 2-hydroxy-3-oxobutyl phosphate from D-ribulose 5-phosphate: step 1/1. Its function is as follows. Catalyzes the conversion of D-ribulose 5-phosphate to formate and 3,4-dihydroxy-2-butanone 4-phosphate. This is 3,4-dihydroxy-2-butanone 4-phosphate synthase (ribB) from Helicobacter pylori (strain ATCC 700392 / 26695) (Campylobacter pylori).